A 448-amino-acid chain; its full sequence is Deoxyguanosinetriphosphate triphosphohydrolase-like protein (448 aa).

The 194-residue stretch at 67-260 folds into the HD domain; the sequence is RLTHSLEVSQ…MELADDIAYG (194 aa).

Belongs to the dGTPase family. Type 2 subfamily.

The chain is Deoxyguanosinetriphosphate triphosphohydrolase-like protein from Aliivibrio fischeri (strain ATCC 700601 / ES114) (Vibrio fischeri).